The following is a 415-amino-acid chain: Squalene synthase 2 (415 aa).

The next 2 helical transmembrane spans lie at 281–301 and 392–412; these read AIFRFCAIPQIMSIGTLALCY and LIVILFIILAILYAYLSSNLP.

It belongs to the phytoene/squalene synthase family. Mg(2+) is required as a cofactor. Requires Mn(2+) as cofactor.

It is found in the endoplasmic reticulum membrane. It catalyses the reaction 2 (2E,6E)-farnesyl diphosphate + NADH + H(+) = squalene + 2 diphosphate + NAD(+). The enzyme catalyses 2 (2E,6E)-farnesyl diphosphate + NADPH + H(+) = squalene + 2 diphosphate + NADP(+). It functions in the pathway terpene metabolism; lanosterol biosynthesis; lanosterol from farnesyl diphosphate: step 1/3. Functionally, component of the triterpene saponins (e.g. ginsenosides or panaxosides) and phytosterols biosynthetic pathways. Catalyzes the biosynthesis of squalene. The polypeptide is Squalene synthase 2 (Panax ginseng (Korean ginseng)).